The following is a 295-amino-acid chain: UDP-N-acetylenolpyruvoylglucosamine reductase (295 aa).

An FAD-binding PCMH-type domain is found at 23 to 188; sequence KVGGPADFLA…ISAKFALKPG (166 aa). Arg-167 is an active-site residue. Residue Ser-217 is the Proton donor of the active site. Glu-287 is a catalytic residue.

It belongs to the MurB family. The cofactor is FAD.

It localises to the cytoplasm. It catalyses the reaction UDP-N-acetyl-alpha-D-muramate + NADP(+) = UDP-N-acetyl-3-O-(1-carboxyvinyl)-alpha-D-glucosamine + NADPH + H(+). It participates in cell wall biogenesis; peptidoglycan biosynthesis. In terms of biological role, cell wall formation. The chain is UDP-N-acetylenolpyruvoylglucosamine reductase from Streptococcus pyogenes serotype M12 (strain MGAS9429).